The following is a 1712-amino-acid chain: Probable ATP-dependent RNA helicase DDX60 (1712 aa).

Positions Leu772–Lys939 constitute a Helicase ATP-binding domain. Residue Ala785 to Thr792 participates in ATP binding. The short motif at Asp889–His892 is the DEVH box element. One can recognise a Helicase C-terminal domain in the interval Tyr1226–Leu1370.

Belongs to the helicase family. As to quaternary structure, interacts with EXOSC1, EXOSC4, RIGI, IFIH1/MDA5 and DHX58/LGP2. In terms of tissue distribution, brain, lymph node, prostate, stomach, thyroid, tongue, trachea, uterus, skeletal muscle, spleen, kidney, liver and small intestine.

The protein localises to the cytoplasm. It catalyses the reaction ATP + H2O = ADP + phosphate + H(+). Positively regulates RIGI- and IFIH1/MDA5-dependent type I interferon and interferon inducible gene expression in response to viral infection. Binds ssRNA, dsRNA and dsDNA and can promote the binding of RIGI to dsRNA. Exhibits antiviral activity against hepatitis C virus and vesicular stomatitis virus (VSV). The chain is Probable ATP-dependent RNA helicase DDX60 (DDX60) from Homo sapiens (Human).